The sequence spans 403 residues: Heparan-sulfate 6-O-sulfotransferase 2 (403 aa).

At 1–7 (MEDRSHK) the chain is on the cytoplasmic side. The chain crosses the membrane as a helical; Signal-anchor for type II membrane protein span at residues 8 to 28 (VLLALVMLFLFAVIVLQYVCP). The Lumenal portion of the chain corresponds to 29–403 (GTECQLLRLR…DYLGNVERWR (375 aa)). Asn-64 carries an N-linked (GlcNAc...) asparagine glycan. Residue 88–96 (HIQKTGGTT) participates in 3'-phosphoadenylyl sulfate binding. Substrate-binding positions include 118-119 (KK), Arg-135, Trp-140, and His-145. The active-site Proton acceptor is His-145. Residues Arg-180 and Ser-188 each contribute to the 3'-phosphoadenylyl sulfate site. Substrate is bound by residues His-192 and Trp-199. Asn-259 is a glycosylation site (N-linked (GlcNAc...) asparagine). A 3'-phosphoadenylyl sulfate-binding site is contributed by 312–314 (TQY). Asn-315 carries an N-linked (GlcNAc...) asparagine glycan. 318–319 (RA) is a binding site for 3'-phosphoadenylyl sulfate. Residues 381–403 (AHLREQGENSSSTDYLGNVERWR) form a disordered region. N-linked (GlcNAc...) asparagine glycosylation is present at Asn-389.

The protein belongs to the sulfotransferase 6 family.

The protein resides in the membrane. The enzyme catalyses alpha-D-glucosaminyl-[heparan sulfate](n) + 3'-phosphoadenylyl sulfate = 6-sulfo-alpha-D-glucosaminyl-[heparan sulfate](n) + adenosine 3',5'-bisphosphate + H(+). 6-O-sulfation enzyme which catalyzes the transfer of sulfate from 3'-phosphoadenosine 5'-phosphosulfate (PAPS) to position 6 of the N-sulfoglucosamine residue (GlcNS) of heparan sulfate. May also play a role in limb development. This chain is Heparan-sulfate 6-O-sulfotransferase 2 (HS6ST2), found in Gallus gallus (Chicken).